Reading from the N-terminus, the 290-residue chain is Bifunctional protein FolD (290 aa).

NADP(+) is bound by residues 167–169, Ser192, and Ile233; that span reads GRS.

The protein belongs to the tetrahydrofolate dehydrogenase/cyclohydrolase family. As to quaternary structure, homodimer.

It carries out the reaction (6R)-5,10-methylene-5,6,7,8-tetrahydrofolate + NADP(+) = (6R)-5,10-methenyltetrahydrofolate + NADPH. It catalyses the reaction (6R)-5,10-methenyltetrahydrofolate + H2O = (6R)-10-formyltetrahydrofolate + H(+). It participates in one-carbon metabolism; tetrahydrofolate interconversion. Functionally, catalyzes the oxidation of 5,10-methylenetetrahydrofolate to 5,10-methenyltetrahydrofolate and then the hydrolysis of 5,10-methenyltetrahydrofolate to 10-formyltetrahydrofolate. In Azorhizobium caulinodans (strain ATCC 43989 / DSM 5975 / JCM 20966 / LMG 6465 / NBRC 14845 / NCIMB 13405 / ORS 571), this protein is Bifunctional protein FolD.